Consider the following 282-residue polypeptide: Bis(5'-nucleosyl)-tetraphosphatase, symmetrical (282 aa).

It belongs to the Ap4A hydrolase family.

The catalysed reaction is P(1),P(4)-bis(5'-adenosyl) tetraphosphate + H2O = 2 ADP + 2 H(+). Its function is as follows. Hydrolyzes diadenosine 5',5'''-P1,P4-tetraphosphate to yield ADP. This is Bis(5'-nucleosyl)-tetraphosphatase, symmetrical from Paraburkholderia phymatum (strain DSM 17167 / CIP 108236 / LMG 21445 / STM815) (Burkholderia phymatum).